The primary structure comprises 357 residues: Chorismate synthase (357 aa).

Residues arginine 48 and arginine 54 each coordinate NADP(+). FMN contacts are provided by residues arginine 125–serine 127, asparagine 238–alanine 239, glycine 278, lysine 293–serine 297, and arginine 319.

It belongs to the chorismate synthase family. As to quaternary structure, homotetramer. FMNH2 is required as a cofactor.

The enzyme catalyses 5-O-(1-carboxyvinyl)-3-phosphoshikimate = chorismate + phosphate. It participates in metabolic intermediate biosynthesis; chorismate biosynthesis; chorismate from D-erythrose 4-phosphate and phosphoenolpyruvate: step 7/7. Its function is as follows. Catalyzes the anti-1,4-elimination of the C-3 phosphate and the C-6 proR hydrogen from 5-enolpyruvylshikimate-3-phosphate (EPSP) to yield chorismate, which is the branch point compound that serves as the starting substrate for the three terminal pathways of aromatic amino acid biosynthesis. This reaction introduces a second double bond into the aromatic ring system. The chain is Chorismate synthase from Blochmanniella floridana.